The following is a 309-amino-acid chain: UDP-URONIC ACID TRANSPORTER 1 (309 aa).

10 helical membrane passes run 9-29, 43-63, 78-98, 104-124, 131-151, 152-172, 193-213, 231-251, 256-278, and 283-302; these read TLFI…VLLL, IFLT…SIVF, FLKV…GNIS, VSFN…FAYL, AWVT…ASGG, EPGF…ARAF, LMLY…LFME, WILL…NFLV, SALT…SILI, and VTVM…VAYG.

The protein belongs to the TPT transporter family. TPT (TC 2.A.7.9) subfamily. As to expression, ubiquitous.

The protein localises to the golgi apparatus membrane. Its function is as follows. UDP-glucuronic acid transporter that modulates the polysaccharide composition of seed mucilage. Transports UDP-glucuronic acid (UDP-GlcA) and UDP-galacturonic acid (UDP-GalA) in vitro. This Arabidopsis thaliana (Mouse-ear cress) protein is UDP-URONIC ACID TRANSPORTER 1.